Reading from the N-terminus, the 344-residue chain is Protein-arginine kinase (344 aa).

Residues 14–244 (IVLSSRIRLA…KQIIQQERLA (231 aa)) form the Phosphagen kinase C-terminal domain. ATP is bound by residues 17-21 (SSRIR), histidine 81, arginine 115, 166-170 (RASAM), and 197-202 (RGLYGE).

The protein belongs to the ATP:guanido phosphotransferase family.

The enzyme catalyses L-arginyl-[protein] + ATP = N(omega)-phospho-L-arginyl-[protein] + ADP + H(+). Its function is as follows. Catalyzes the specific phosphorylation of arginine residues in proteins. This Clostridium novyi (strain NT) protein is Protein-arginine kinase.